A 139-amino-acid polypeptide reads, in one-letter code: MGREKKQEYALFTAWGASFIATLGSLYFSEIMKFEPCVLCWYQRIFMYPFVLWLGIAVVKKDYRIASYSLPIASIGACISLYHYVIQKVAAFSAAGAACGRVPCTGEYINWFGFVTIPFLALIGFITIAVCSFIVIKNK.

Residues 8-27 (EYALFTAWGASFIATLGSLY) traverse the membrane as a helical segment. The cysteines at positions 37 and 40 are disulfide-linked. Helical transmembrane passes span 42–61 (YQRI…VVKK) and 68–85 (YSLP…YHYV). Residues cysteine 99 and cysteine 104 are joined by a disulfide bond. Residues 113-135 (GFVTIPFLALIGFITIAVCSFIV) form a helical membrane-spanning segment.

The protein belongs to the DsbB family. BdbC subfamily.

It is found in the cell membrane. Its function is as follows. Required for disulfide bond formation in some proteins. The chain is Probable disulfide formation protein C 1 (bdbC1) from Bacillus anthracis.